The chain runs to 641 residues: Fructose-1,6-bisphosphatase class 3 (641 aa).

This sequence belongs to the FBPase class 3 family. The cofactor is Mn(2+).

The catalysed reaction is beta-D-fructose 1,6-bisphosphate + H2O = beta-D-fructose 6-phosphate + phosphate. Its pathway is carbohydrate biosynthesis; gluconeogenesis. The chain is Fructose-1,6-bisphosphatase class 3 from Bacillus velezensis (strain DSM 23117 / BGSC 10A6 / LMG 26770 / FZB42) (Bacillus amyloliquefaciens subsp. plantarum).